Reading from the N-terminus, the 209-residue chain is Floral homeotic protein GLOBOSA (209 aa).

One can recognise an MADS-box domain in the interval 3 to 57 (RGKIEIKRIENSSNRQVTYSKRRNGILKKAKEISVLCDARVSVIIFASSGKMHEF). The K-box domain maps to 82 to 173 (HENLDNEINK…QLEIASMNRN (92 aa)).

As to expression, expressed mainly in floral organs and, within the flower, expression is restricted to petals and stamens.

It localises to the nucleus. Its function is as follows. Transcription factor involved in the genetic control of flower development. Acts in conjunction with DEFICIENS (defA). The polypeptide is Floral homeotic protein GLOBOSA (GLO) (Nicotiana tabacum (Common tobacco)).